The chain runs to 1598 residues: Pentafunctional AROM polypeptide (1598 aa).

Residues 1 to 384 (MGVPTKISIL…YEPRACTVSN (384 aa)) are 3-dehydroquinate synthase. NAD(+) contacts are provided by residues 44-46 (DTN), 81-84 (ESSK), 114-116 (GGV), and Asp-119. Arg-130 serves as a coordination point for 7-phospho-2-dehydro-3-deoxy-D-arabino-heptonate. 139 to 140 (TT) is an NAD(+) binding site. Asp-146 and Lys-152 together coordinate 7-phospho-2-dehydro-3-deoxy-D-arabino-heptonate. Lys-161 contacts NAD(+). Asn-162 provides a ligand contact to 7-phospho-2-dehydro-3-deoxy-D-arabino-heptonate. NAD(+) contacts are provided by residues 179–182 (FLNT) and Asn-190. Glu-194 provides a ligand contact to Zn(2+). Residues 194-197 (EVIK) and Lys-250 contribute to the 7-phospho-2-dehydro-3-deoxy-D-arabino-heptonate site. The active-site Proton acceptor; for 3-dehydroquinate synthase activity is Glu-260. 7-phospho-2-dehydro-3-deoxy-D-arabino-heptonate-binding positions include 264-268 (RNLLN) and His-271. A Zn(2+)-binding site is contributed by His-271. The active-site Proton acceptor; for 3-dehydroquinate synthase activity is the His-275. Residues His-287 and Lys-356 each coordinate 7-phospho-2-dehydro-3-deoxy-D-arabino-heptonate. His-287 lines the Zn(2+) pocket. Residues 397–842 (VYPGFPKSLN…WDTLAQTFKV (446 aa)) are EPSP synthase. Cys-824 (for EPSP synthase activity) is an active-site residue. Residues 867–1059 (AASIFIIGMR…RRKENTFFVS (193 aa)) form a shikimate kinase region. Position 874 to 881 (874 to 881 (GMRGAGKT)) interacts with ATP. The segment at 1060–1280 (LTFPDLTPAS…AAPGQLSARE (221 aa)) is 3-dehydroquinase. His-1183 (proton acceptor; for 3-dehydroquinate dehydratase activity) is an active-site residue. Residue Lys-1211 is the Schiff-base intermediate with substrate; for 3-dehydroquinate dehydratase activity of the active site. The segment at 1293–1598 (AKKFAVIGKP…GVSSSDDIIS (306 aa)) is shikimate dehydrogenase.

The protein in the N-terminal section; belongs to the sugar phosphate cyclases superfamily. Dehydroquinate synthase family. It in the 2nd section; belongs to the EPSP synthase family. This sequence in the 3rd section; belongs to the shikimate kinase family. In the 4th section; belongs to the type-I 3-dehydroquinase family. The protein in the C-terminal section; belongs to the shikimate dehydrogenase family. Homodimer. The cofactor is Zn(2+).

Its subcellular location is the cytoplasm. It catalyses the reaction 7-phospho-2-dehydro-3-deoxy-D-arabino-heptonate = 3-dehydroquinate + phosphate. It carries out the reaction 3-dehydroquinate = 3-dehydroshikimate + H2O. The enzyme catalyses shikimate + NADP(+) = 3-dehydroshikimate + NADPH + H(+). The catalysed reaction is shikimate + ATP = 3-phosphoshikimate + ADP + H(+). It catalyses the reaction 3-phosphoshikimate + phosphoenolpyruvate = 5-O-(1-carboxyvinyl)-3-phosphoshikimate + phosphate. It participates in metabolic intermediate biosynthesis; chorismate biosynthesis; chorismate from D-erythrose 4-phosphate and phosphoenolpyruvate: step 2/7. The protein operates within metabolic intermediate biosynthesis; chorismate biosynthesis; chorismate from D-erythrose 4-phosphate and phosphoenolpyruvate: step 3/7. Its pathway is metabolic intermediate biosynthesis; chorismate biosynthesis; chorismate from D-erythrose 4-phosphate and phosphoenolpyruvate: step 4/7. It functions in the pathway metabolic intermediate biosynthesis; chorismate biosynthesis; chorismate from D-erythrose 4-phosphate and phosphoenolpyruvate: step 5/7. It participates in metabolic intermediate biosynthesis; chorismate biosynthesis; chorismate from D-erythrose 4-phosphate and phosphoenolpyruvate: step 6/7. In terms of biological role, the AROM polypeptide catalyzes 5 consecutive enzymatic reactions in prechorismate polyaromatic amino acid biosynthesis. This Paracoccidioides lutzii (strain ATCC MYA-826 / Pb01) (Paracoccidioides brasiliensis) protein is Pentafunctional AROM polypeptide.